The following is a 141-amino-acid chain: Cystatin-S (141 aa).

Positions 1 to 27 (MAYLLHAQLFLLTTFILVLNMRLCPVL) are cleaved as a signal peptide. The Secondary area of contact motif lies at 76–80 (QVVAG). 2 disulfides stabilise this stretch: Cys-94-Cys-104 and Cys-118-Cys-138.

The protein belongs to the cystatin family. As to expression, found in saliva, tears, urine and seminal fluid.

It is found in the secreted. Functionally, this protein strongly inhibits papain and ficin, partially inhibits stem bromelain and bovine cathepsin C, but does not inhibit porcine cathepsin B or clostripain. Papain is inhibited non-competitively. The polypeptide is Cystatin-S (Cst4) (Rattus norvegicus (Rat)).